Consider the following 215-residue polypeptide: Elongation factor Ts (215 aa).

The involved in Mg(2+) ion dislocation from EF-Tu stretch occupies residues T80 to V83.

This sequence belongs to the EF-Ts family.

It localises to the cytoplasm. Its function is as follows. Associates with the EF-Tu.GDP complex and induces the exchange of GDP to GTP. It remains bound to the aminoacyl-tRNA.EF-Tu.GTP complex up to the GTP hydrolysis stage on the ribosome. This Heliobacterium modesticaldum (strain ATCC 51547 / Ice1) protein is Elongation factor Ts.